The following is a 223-amino-acid chain: N-acetylmuramate alpha-1-phosphate uridylyltransferase (223 aa).

Residues 11 to 13 and lysine 23 contribute to the UTP site; that span reads GER. Asparagine 105 is a binding site for substrate. Aspartate 107 is a binding site for Mg(2+). Residues aspartate 140 and aspartate 205 each contribute to the substrate site. Aspartate 205 serves as a coordination point for Mg(2+).

Belongs to the nucleotidyltransferase MurU family. Monomer. It depends on Mg(2+) as a cofactor.

It carries out the reaction N-acetyl-alpha-D-muramate 1-phosphate + UDP + H(+) = UDP-N-acetyl-alpha-D-muramate + phosphate. It participates in cell wall biogenesis; peptidoglycan recycling. With respect to regulation, is completely inhibited by EDTA in vitro. In terms of biological role, catalyzes the formation of UDP-N-acetylmuramate (UDP-MurNAc), a crucial precursor of the bacterial peptidoglycan cell wall, from UTP and MurNAc-alpha-1P. Is involved in peptidoglycan recycling as part of a cell wall recycling pathway that bypasses de novo biosynthesis of the peptidoglycan precursor UDP-MurNAc. Plays a role in intrinsic resistance to fosfomycin, which targets the de novo synthesis of UDP-MurNAc. Is not able to use GlcNAc-alpha-1P and GalNAc-alpha-1P as substrates. Cannot accept other nucleotide triphosphates (ATP, CTP, TTP, or GTP) than UTP. In Pseudomonas putida (strain ATCC 47054 / DSM 6125 / CFBP 8728 / NCIMB 11950 / KT2440), this protein is N-acetylmuramate alpha-1-phosphate uridylyltransferase.